Here is a 79-residue protein sequence, read N- to C-terminus: Small serum protein 3 (79 aa).

The N-terminal stretch at 1 to 19 (MKVFFILIIFSFTLATCQG) is a signal peptide. 3 disulfide bridges follow: Cys-21-Cys-72, Cys-39-Cys-64, and Cys-62-Cys-71.

The protein resides in the secreted. Shows an slight inhibitory effect toward the metalloproteinase brevilysin H6, but does not inhibit the metalloproteinases thermolysin, HR1A and HR1B. This Protobothrops flavoviridis (Habu) protein is Small serum protein 3.